A 277-amino-acid chain; its full sequence is Indole-3-glycerol phosphate synthase (277 aa).

The protein belongs to the TrpC family.

It carries out the reaction 1-(2-carboxyphenylamino)-1-deoxy-D-ribulose 5-phosphate + H(+) = (1S,2R)-1-C-(indol-3-yl)glycerol 3-phosphate + CO2 + H2O. The protein operates within amino-acid biosynthesis; L-tryptophan biosynthesis; L-tryptophan from chorismate: step 4/5. The sequence is that of Indole-3-glycerol phosphate synthase from Pseudomonas putida (strain ATCC 47054 / DSM 6125 / CFBP 8728 / NCIMB 11950 / KT2440).